Consider the following 540-residue polypeptide: Glucose-6-phosphate isomerase (540 aa).

The Proton donor role is filled by E350. Residues H381 and K503 contribute to the active site.

It belongs to the GPI family.

Its subcellular location is the cytoplasm. It carries out the reaction alpha-D-glucose 6-phosphate = beta-D-fructose 6-phosphate. Its pathway is carbohydrate biosynthesis; gluconeogenesis. It functions in the pathway carbohydrate degradation; glycolysis; D-glyceraldehyde 3-phosphate and glycerone phosphate from D-glucose: step 2/4. Catalyzes the reversible isomerization of glucose-6-phosphate to fructose-6-phosphate. In Paraburkholderia phymatum (strain DSM 17167 / CIP 108236 / LMG 21445 / STM815) (Burkholderia phymatum), this protein is Glucose-6-phosphate isomerase.